The chain runs to 130 residues: uncharacterized protein (130 aa).

Positions 23 to 130 are disordered; the sequence is SHLRLLPTAN…GAHQLSSPSS (108 aa). Residues 30 to 45 show a composition bias toward polar residues; sequence TANSPSGSNQPTNPNR.

This is an uncharacterized protein from Homo sapiens (Human).